Reading from the N-terminus, the 79-residue chain is Protein OPG081 (79 aa).

Residues 2-8 (VDAITVL) are Intravirion-facing. A helical membrane pass occupies residues 9 to 29 (TAICITVLMLLMVISGTAMIV). Over 30–47 (KELNPNDIFTMQSLKFNR) the chain is Virion surface. Residues 48–68 (TVTIFKYIGLFIYIPGTIILY) form a helical membrane-spanning segment. Residues 69 to 79 (ATYVKSLLMKN) lie on the Intravirion side of the membrane.

This sequence belongs to the orthopoxvirus OPG081 family.

It localises to the virion membrane. Its function is as follows. Envelope protein. The polypeptide is Protein OPG081 (OPG081) (Cynomys gunnisoni (Gunnison's prairie dog)).